A 339-amino-acid chain; its full sequence is Aspartate carbamoyltransferase catalytic subunit (339 aa).

Residues Arg-59 and Thr-60 each contribute to the carbamoyl phosphate site. Lys-87 provides a ligand contact to L-aspartate. 3 residues coordinate carbamoyl phosphate: Arg-109, His-142, and Gln-145. L-aspartate-binding residues include Arg-182 and Arg-253. Carbamoyl phosphate-binding residues include Gly-294 and Pro-295.

The protein belongs to the aspartate/ornithine carbamoyltransferase superfamily. ATCase family. As to quaternary structure, heterododecamer (2C3:3R2) of six catalytic PyrB chains organized as two trimers (C3), and six regulatory PyrI chains organized as three dimers (R2).

The catalysed reaction is carbamoyl phosphate + L-aspartate = N-carbamoyl-L-aspartate + phosphate + H(+). The protein operates within pyrimidine metabolism; UMP biosynthesis via de novo pathway; (S)-dihydroorotate from bicarbonate: step 2/3. Functionally, catalyzes the condensation of carbamoyl phosphate and aspartate to form carbamoyl aspartate and inorganic phosphate, the committed step in the de novo pyrimidine nucleotide biosynthesis pathway. This is Aspartate carbamoyltransferase catalytic subunit from Prochlorococcus marinus (strain NATL2A).